Reading from the N-terminus, the 212-residue chain is Proheparin-binding EGF-like growth factor (212 aa).

An N-terminal signal peptide occupies residues 1-18 (MDGRVVLIHALLTAVCSA). The Extracellular segment spans residues 19-167 (AVGKFGRDGP…PSTYDHTTAL (149 aa)). Residues 82-108 (SKPQGPVTPKKKGNGNKRRKGKGLGKK) form a disordered region. The segment covering 90-106 (PKKKGNGNKRRKGKGLG) has biased composition (basic residues). The region spanning 108–148 (KRDPCLRKYKDFCIHGECKYIRELGAPSCICQPGYHGERCH) is the EGF-like domain. 3 disulfide bridges follow: Cys112/Cys125, Cys120/Cys136, and Cys138/Cys147. The propeptide at 153-212 (PVEHPPSTYDHTTALAVVAVVLSSLCLVIITALLMFRCHKRGVYDVENEEKIKLGITVNH) is C-terminal. A helical transmembrane segment spans residues 168 to 188 (AVVAVVLSSLCLVIITALLMF). The Cytoplasmic segment spans residues 189–212 (RCHKRGVYDVENEEKIKLGITVNH).

In terms of assembly, interacts with CNIH2.

It localises to the secreted. The protein localises to the extracellular space. The protein resides in the cell membrane. In terms of biological role, may be involved in macrophage-mediated cellular proliferation. It is mitogenic for fibroblasts and smooth muscle but not endothelial cells. It is able to bind EGF receptor/EGFR with higher affinity than EGF itself and is a far more potent mitogen for smooth muscle cells than EGF. Plays an important role in the proper development of cranial nerves by inhibiting the migration of the cranial neural crest cells (NCCs) into the odd-numbered neuromeres (r3 and r5) of the hindbrain Plays a role in mediating v-Jun-induced oncogenic transformation. The chain is Proheparin-binding EGF-like growth factor (HBEGF) from Gallus gallus (Chicken).